Here is a 326-residue protein sequence, read N- to C-terminus: ATP-dependent 6-phosphofructokinase (326 aa).

Gly14 lines the ATP pocket. 24-28 serves as a coordination point for ADP; sequence RAVVR. ATP is bound by residues 75 to 76 and 105 to 108; these read RF and GNGS. Asn106 is a Mg(2+) binding site. 129–131 contributes to the substrate binding site; it reads TID. Asp131 serves as the catalytic Proton acceptor. Residue Arg158 coordinates ADP. Substrate is bound by residues Arg166 and 173-175; that span reads MGR. Residues 189–191, Lys215, and 216–218 contribute to the ADP site; these read GAE and KSA. Substrate-binding positions include Glu225, Arg248, and 254 to 257; that span reads HTQR.

This sequence belongs to the phosphofructokinase type A (PFKA) family. ATP-dependent PFK group I subfamily. Prokaryotic clade 'B1' sub-subfamily. As to quaternary structure, homotetramer. Mg(2+) is required as a cofactor.

The protein resides in the cytoplasm. The enzyme catalyses beta-D-fructose 6-phosphate + ATP = beta-D-fructose 1,6-bisphosphate + ADP + H(+). Its pathway is carbohydrate degradation; glycolysis; D-glyceraldehyde 3-phosphate and glycerone phosphate from D-glucose: step 3/4. Its activity is regulated as follows. Allosterically activated by ADP and other diphosphonucleosides, and allosterically inhibited by phosphoenolpyruvate. Functionally, catalyzes the phosphorylation of D-fructose 6-phosphate to fructose 1,6-bisphosphate by ATP, the first committing step of glycolysis. This is ATP-dependent 6-phosphofructokinase from Coxiella burnetii (strain RSA 493 / Nine Mile phase I).